We begin with the raw amino-acid sequence, 349 residues long: N-acetyl-gamma-glutamyl-phosphate reductase (349 aa).

Cys-149 is a catalytic residue.

The protein belongs to the NAGSA dehydrogenase family. Type 1 subfamily.

The protein resides in the cytoplasm. It carries out the reaction N-acetyl-L-glutamate 5-semialdehyde + phosphate + NADP(+) = N-acetyl-L-glutamyl 5-phosphate + NADPH + H(+). It functions in the pathway amino-acid biosynthesis; L-arginine biosynthesis; N(2)-acetyl-L-ornithine from L-glutamate: step 3/4. Its function is as follows. Catalyzes the NADPH-dependent reduction of N-acetyl-5-glutamyl phosphate to yield N-acetyl-L-glutamate 5-semialdehyde. This Acinetobacter baumannii (strain AB307-0294) protein is N-acetyl-gamma-glutamyl-phosphate reductase.